Reading from the N-terminus, the 476-residue chain is Probable G-protein coupled receptor No9 (476 aa).

At 1–36 (MEGPPLSPAPADNVTLNVSCGRPATLFDWADHRLIS) the chain is on the extracellular side. Residues Asn-13 and Asn-17 are each glycosylated (N-linked (GlcNAc...) asparagine). A helical membrane pass occupies residues 37-60 (LLALAFLNLMVVAGNLLVVMAVFV). The Cytoplasmic segment spans residues 61 to 69 (HSKLRTVTN). A helical transmembrane segment spans residues 70 to 93 (LFIVSLACADLLVGMLVLPFSATL). The Extracellular portion of the chain corresponds to 94-103 (EVLDVWLYGD). The helical transmembrane segment at 104 to 127 (VWCSVWLAVDVWMCTSSILNLCAI) threads the bilayer. Cys-106 and Cys-192 form a disulfide bridge. Residues 128–152 (SLDRYLAVSQPISYPSLMSTRRAKQ) lie on the Cytoplasmic side of the membrane. Residues 153–172 (LIAAVWVLSFVICFPPLVGW) form a helical membrane-spanning segment. The Extracellular portion of the chain corresponds to 173–200 (NDRPGTLIGSRGSSACRLTCELTNERGY). A helical membrane pass occupies residues 201–221 (VIYSALGSFFLPSTVMLFFYG). Over 222-375 (RIYRTAVSTT…FRMETKAAKT (154 aa)) the chain is Cytoplasmic. The span at 266 to 278 (AAAGGARAHGQVR) shows a compositional bias: low complexity. 2 disordered regions span residues 266 to 293 (AAAG…NKPS) and 317 to 351 (DSRP…PRFI). Residues 376 to 396 (VGIIVGLFILCWLPFFVCYLV) traverse the membrane as a helical segment. At 397–406 (RGFCADCVPP) the chain is on the extracellular side. Residues 407-430 (LLFSVFFWLGYCNSAVNPCVYALC) form a helical membrane-spanning segment. Topologically, residues 431-476 (SRDFRFAFSSILCKCVCRRGAMERRFRRTLLVGNRSQTEEDCEVAD) are cytoplasmic.

Belongs to the G-protein coupled receptor 1 family.

The protein localises to the cell membrane. Functionally, orphan G-protein coupled receptor. This is Probable G-protein coupled receptor No9 from Amphibalanus amphitrite (Striped barnacle).